The following is a 620-amino-acid chain: Cilia- and flagella-associated protein 52 (620 aa).

11 WD repeats span residues 62-106 (GHGN…LLAR), 109-150 (LHKG…AICG), 156-195 (LNVG…RKIW), 288-327 (QLQG…ETLI), 330-369 (CHFD…ELLR), 372-411 (VPNM…LMYV), 415-454 (AHRI…QKLE), 459-498 (EHKS…RNQM), 500-539 (LANT…VIRE), 543-582 (SLSG…VTHV), and 585-620 (GHSG…PYTS).

The protein belongs to the CFAP52 family. As to quaternary structure, microtubule inner protein component of sperm flagellar doublet microtubules. Interacts with BRCA2. Interacts with the CCT chaperonin complex. Interacts with HSP70. Interacts with AK8. Interacts with CFAP45. Interacts with DNAI1. Interacts with IQDC. In terms of tissue distribution, expressed in respiratory cells and sperm (at protein level). Highly expressed in testis. Up-regulated in hepatocellular carcinoma (HCC).

It localises to the cytoplasm. The protein localises to the cytoskeleton. The protein resides in the cilium axoneme. It is found in the flagellum axoneme. In terms of biological role, microtubule inner protein (MIP) part of the dynein-decorated doublet microtubules (DMTs) in cilia axoneme. Important for proper ciliary and flagellar beating. May act in cooperation with CFAP45 and axonemal dynein subunit DNAH11. May play a role in cell growth and/or survival. This chain is Cilia- and flagella-associated protein 52, found in Homo sapiens (Human).